Here is a 32-residue protein sequence, read N- to C-terminus: Trypsin inhibitor 3 (32 aa).

3 disulfides stabilise this stretch: Cys-6/Cys-23, Cys-13/Cys-25, and Cys-19/Cys-31.

This sequence belongs to the protease inhibitor I7 (squash-type serine protease inhibitor) family.

The protein localises to the secreted. Its function is as follows. Inhibits trypsin. This is Trypsin inhibitor 3 from Cucurbita pepo (Vegetable marrow).